The chain runs to 334 residues: Protein U17/U16 (334 aa).

The protein belongs to the herpesviridae US22 family.

In terms of biological role, isoform 3 can transactivate the human immunodeficiency virus type 1 promoter. This chain is Protein U17/U16 (U17/U16), found in Human herpesvirus 6A (strain Uganda-1102) (HHV-6 variant A).